We begin with the raw amino-acid sequence, 192 residues long: MAKLYFYYASMNAGKSTNLLQADFNYRERGMATMLWTAALDDRGGERAIESRIGLGADAHRFDAGTDLWQRISAAHAVQPLSCVLVDEAQFLRRDQVWQLARVADAAGIPVLCYGLRTDFQGELFEGSAALLGIADSLIELKAVCHCGRKATMNLRVDDSGAAVRAGRQTEIGGNDRYVALCRRHFSEAMGQ.

ATP is bound by residues 9–16 (ASMNAGKS) and 87–90 (DEAQ). Glu-88 serves as the catalytic Proton acceptor. Residues Cys-145, Cys-147, Cys-182, and His-185 each coordinate Zn(2+).

The protein belongs to the thymidine kinase family. Homotetramer.

Its subcellular location is the cytoplasm. It carries out the reaction thymidine + ATP = dTMP + ADP + H(+). In Novosphingobium aromaticivorans (strain ATCC 700278 / DSM 12444 / CCUG 56034 / CIP 105152 / NBRC 16084 / F199), this protein is Thymidine kinase.